A 125-amino-acid chain; its full sequence is Aspercryptin biosynthesis cluster protein K (125 aa).

Positions 104 to 125 are disordered; it reads QRAESVAGDSRPREHRQGAVGY. Over residues 113–125 the composition is skewed to basic and acidic residues; the sequence is SRPREHRQGAVGY.

It functions in the pathway secondary metabolite biosynthesis. Its function is as follows. Part of the gene cluster that mediates the biosynthesis of aspercryptins, linear lipopeptides built from six amino acids including 2 highly unusual and nonproteogenic amino acids, 2-amino-octanoic acid (2aoa) and 2-amino-dodecanol (2adol). The core structure of aspercryptins is as follows: Ser/Ala-Thr-Ile/Val-2aoa-Asn-2adol. The first step of aspercryptin biosynthesis is the generation of the fatty acid precursors, octanoic and dodecanoic acids, by the FAS subunits atnF and atnM. The fatty acid precursors are likely transformed into the corresponding alpha-amino fatty acids in three steps. First, they are hydroxylated by the cytochrome P450 monooxygenase atnE, then oxidized to the corresponding alpha-keto acids by the NAD(P)-dependent oxidoreductase atnD, and finally converted to the alpha-amino fatty acids by the PLP-dependent aminotransferases atnH or atnJ. the alpha-amino fatty acids, 2-amino-octanoic and 2-amino-dodecanoic acids, are recognized, activated, and covalently tethered to the NRPS atnA by its fourth and sixth adenylation domains. The second module of atnA is the Thr module and contains an epimerase (E) domain responsible for the epimerization of Thr to D-allo-Thr. Additionally, despite atnA having only one epimerase domain, the first amino acid of aspercryptin A1 is D-Ser, suggesting that serine is either loaded directly as D-Ser on the first module or that the epimerase domain in the threonine module epimerizes both L-Ser and L-Thr. After condensation of the hexapeptide of aspercryptin, the C-terminal reductase (TE) domain might be involved in the reductive release and production of the aldehyde hexapeptide. Further reduction would generate aspercryptins. The variety of aspercryptins produced reflects the flexibility of the atnA NRPS, allowing incorporation of alanine instead of serine, valine for isoleucine, and a C10 fatty amino alcohol instead of the C12 version. AtnB seems to be involved in the selectivity for Ile versus Val by the third module. Moreover, type B, C and D aspercryptins have an additional N-terminal cichorine, acetyl and propionyl group respectively. The polypeptide is Aspercryptin biosynthesis cluster protein K (Emericella nidulans (strain FGSC A4 / ATCC 38163 / CBS 112.46 / NRRL 194 / M139) (Aspergillus nidulans)).